Here is a 154-residue protein sequence, read N- to C-terminus: 6,7-dimethyl-8-ribityllumazine synthase (154 aa).

5-amino-6-(D-ribitylamino)uracil is bound by residues Phe22, 56 to 58, and 80 to 82; these read AFE and TVI. 85–86 is a binding site for (2S)-2-hydroxy-3-oxobutyl phosphate; that stretch reads AT. Residue His88 is the Proton donor of the active site. Phe113 contacts 5-amino-6-(D-ribitylamino)uracil. Arg127 contributes to the (2S)-2-hydroxy-3-oxobutyl phosphate binding site.

Belongs to the DMRL synthase family. As to quaternary structure, forms an icosahedral capsid composed of 60 subunits, arranged as a dodecamer of pentamers.

It catalyses the reaction (2S)-2-hydroxy-3-oxobutyl phosphate + 5-amino-6-(D-ribitylamino)uracil = 6,7-dimethyl-8-(1-D-ribityl)lumazine + phosphate + 2 H2O + H(+). The protein operates within cofactor biosynthesis; riboflavin biosynthesis; riboflavin from 2-hydroxy-3-oxobutyl phosphate and 5-amino-6-(D-ribitylamino)uracil: step 1/2. In terms of biological role, catalyzes the formation of 6,7-dimethyl-8-ribityllumazine by condensation of 5-amino-6-(D-ribitylamino)uracil with 3,4-dihydroxy-2-butanone 4-phosphate. This is the penultimate step in the biosynthesis of riboflavin. The chain is 6,7-dimethyl-8-ribityllumazine synthase from Bacillus amyloliquefaciens (Bacillus velezensis).